A 218-amino-acid polypeptide reads, in one-letter code: Cytidylate kinase (218 aa).

11–19 serves as a coordination point for ATP; that stretch reads GPGASGKGT.

The protein belongs to the cytidylate kinase family. Type 1 subfamily.

The protein resides in the cytoplasm. The enzyme catalyses CMP + ATP = CDP + ADP. The catalysed reaction is dCMP + ATP = dCDP + ADP. The sequence is that of Cytidylate kinase from Neisseria gonorrhoeae (strain ATCC 700825 / FA 1090).